A 703-amino-acid chain; its full sequence is Polyribonucleotide nucleotidyltransferase (703 aa).

Residues D487 and D493 each contribute to the Mg(2+) site. The region spanning 554–613 is the KH domain; sequence PKMETIKIDPDKIRDVIGKGGATIRSICEDTGASIDIDDNGTVRIYAESKLAADEAIYRI. Residues 623–691 form the S1 motif domain; the sequence is GKLYRGKVER…ARGRIKLSMK (69 aa).

It belongs to the polyribonucleotide nucleotidyltransferase family. In terms of assembly, component of the RNA degradosome, which is a multiprotein complex involved in RNA processing and mRNA degradation. Mg(2+) is required as a cofactor.

The protein localises to the cytoplasm. The catalysed reaction is RNA(n+1) + phosphate = RNA(n) + a ribonucleoside 5'-diphosphate. In terms of biological role, involved in mRNA degradation. Catalyzes the phosphorolysis of single-stranded polyribonucleotides processively in the 3'- to 5'-direction. The sequence is that of Polyribonucleotide nucleotidyltransferase from Hahella chejuensis (strain KCTC 2396).